A 168-amino-acid chain; its full sequence is Ribosome maturation factor RimP (168 aa).

This sequence belongs to the RimP family.

It localises to the cytoplasm. Required for maturation of 30S ribosomal subunits. This chain is Ribosome maturation factor RimP, found in Syntrophobacter fumaroxidans (strain DSM 10017 / MPOB).